A 475-amino-acid chain; its full sequence is tRNA-2-methylthio-N(6)-dimethylallyladenosine synthase (475 aa).

The disordered stretch occupies residues 1–21; the sequence is MTTAPTSPALPASSDTAPTGP. Residues 24–145 enclose the MTTase N-terminal domain; that stretch reads RGLHVITWGC…LPEMVARAAR (122 aa). The [4Fe-4S] cluster site is built by Cys-33, Cys-69, Cys-108, Cys-186, Cys-190, and Cys-193. Residues 172 to 404 form the Radical SAM core domain; it reads TQGNLTAFLT…QALLREQQDA (233 aa). One can recognise a TRAM domain in the interval 407-469; the sequence is ADMVGTVQEI…TNSLGGTLIR (63 aa).

This sequence belongs to the methylthiotransferase family. MiaB subfamily. Monomer. It depends on [4Fe-4S] cluster as a cofactor.

The protein resides in the cytoplasm. It carries out the reaction N(6)-dimethylallyladenosine(37) in tRNA + (sulfur carrier)-SH + AH2 + 2 S-adenosyl-L-methionine = 2-methylsulfanyl-N(6)-dimethylallyladenosine(37) in tRNA + (sulfur carrier)-H + 5'-deoxyadenosine + L-methionine + A + S-adenosyl-L-homocysteine + 2 H(+). Catalyzes the methylthiolation of N6-(dimethylallyl)adenosine (i(6)A), leading to the formation of 2-methylthio-N6-(dimethylallyl)adenosine (ms(2)i(6)A) at position 37 in tRNAs that read codons beginning with uridine. In Gluconobacter oxydans (strain 621H) (Gluconobacter suboxydans), this protein is tRNA-2-methylthio-N(6)-dimethylallyladenosine synthase.